The sequence spans 148 residues: Deoxyuridine 5'-triphosphate nucleotidohydrolase (148 aa).

Substrate contacts are provided by residues 67 to 69 (RSG), Asn-80, 84 to 86 (TID), and Lys-94.

The protein belongs to the dUTPase family. The cofactor is Mg(2+).

The catalysed reaction is dUTP + H2O = dUMP + diphosphate + H(+). It functions in the pathway pyrimidine metabolism; dUMP biosynthesis; dUMP from dCTP (dUTP route): step 2/2. Its function is as follows. This enzyme is involved in nucleotide metabolism: it produces dUMP, the immediate precursor of thymidine nucleotides and it decreases the intracellular concentration of dUTP so that uracil cannot be incorporated into DNA. This is Deoxyuridine 5'-triphosphate nucleotidohydrolase from Orientia tsutsugamushi (strain Ikeda) (Rickettsia tsutsugamushi).